The sequence spans 274 residues: Kit ligand (274 aa).

An N-terminal signal peptide occupies residues 1-25; sequence MKKTQTWIITCIYLQLLLFNPLVRT. The Extracellular portion of the chain corresponds to 26-215; it reads KGICRNRVTD…ANPLGDSNLQ (190 aa). 2 disulfides stabilise this stretch: cysteine 29–cysteine 114 and cysteine 68–cysteine 164. N-linked (GlcNAc...) asparagine glycans are attached at residues asparagine 90, asparagine 97, asparagine 145, and asparagine 196. A helical transmembrane segment spans residues 216 to 238; that stretch reads WAAMALPAFFSLVIGFAFGALYW. Residues 239–274 lie on the Cytoplasmic side of the membrane; that stretch reads KKKQPNLTRTAENIQINEEDNEISMLQEKEREFQEV.

This sequence belongs to the SCF family. As to quaternary structure, homodimer, non-covalently linked. Heterotetramer with KIT, binding two KIT molecules; thereby mediates KIT dimerization and subsequent activation by autophosphorylation. In terms of processing, a soluble form is produced by proteolytic processing of isoform 1 in the extracellular domain.

It is found in the cytoplasm. Its subcellular location is the cytoskeleton. It localises to the cell membrane. The protein localises to the cell projection. The protein resides in the lamellipodium. It is found in the filopodium. Its subcellular location is the secreted. Functionally, ligand for the receptor-type protein-tyrosine kinase KIT. Plays an essential role in the regulation of cell survival and proliferation, hematopoiesis, stem cell maintenance, gametogenesis, mast cell development, migration and function, and in melanogenesis. KITLG/SCF binding can activate several signaling pathways. Promotes phosphorylation of PIK3R1, the regulatory subunit of phosphatidylinositol 3-kinase, and subsequent activation of the kinase AKT1. KITLG/SCF and KIT also transmit signals via GRB2 and activation of RAS, RAF1 and the MAP kinases MAPK1/ERK2 and/or MAPK3/ERK1. KITLG/SCF and KIT promote activation of STAT family members STAT1, STAT3 and STAT5. KITLG/SCF and KIT promote activation of PLCG1, leading to the production of the cellular signaling molecules diacylglycerol and inositol 1,4,5-trisphosphate. KITLG/SCF acts synergistically with other cytokines, probably interleukins. The polypeptide is Kit ligand (KITLG) (Neovison vison (American mink)).